The following is a 333-amino-acid chain: uncharacterized protein (333 aa).

It to bacterial alkanal monooxygenase alpha and beta chains.

This is an uncharacterized protein from Bacillus subtilis (strain 168).